The sequence spans 253 residues: ER membrane protein complex subunit 3 (253 aa).

Transmembrane regions (helical) follow at residues 10 to 30 (WVLL…QYIM), 126 to 146 (FIPQ…FILM), and 176 to 196 (SISW…LIGL).

Belongs to the EMC3 family. Component of the ER membrane protein complex (EMC), which is composed of EMC1, EMC2, EMC3, EMC4, EMC5 and EMC6.

The protein localises to the endoplasmic reticulum membrane. The EMC seems to be required for efficient folding of proteins in the endoplasmic reticulum (ER). This is ER membrane protein complex subunit 3 (AIM27) from Saccharomyces cerevisiae (strain RM11-1a) (Baker's yeast).